The following is a 148-amino-acid chain: Large ribosomal subunit protein bL9 (148 aa).

It belongs to the bacterial ribosomal protein bL9 family.

Functionally, binds to the 23S rRNA. The protein is Large ribosomal subunit protein bL9 of Parafrankia sp. (strain EAN1pec).